The chain runs to 142 residues: Large ribosomal subunit protein uL11 (142 aa).

Belongs to the universal ribosomal protein uL11 family. In terms of assembly, part of the ribosomal stalk of the 50S ribosomal subunit. Interacts with L10 and the large rRNA to form the base of the stalk. L10 forms an elongated spine to which L12 dimers bind in a sequential fashion forming a multimeric L10(L12)X complex. Post-translationally, one or more lysine residues are methylated.

Forms part of the ribosomal stalk which helps the ribosome interact with GTP-bound translation factors. This is Large ribosomal subunit protein uL11 from Parvibaculum lavamentivorans (strain DS-1 / DSM 13023 / NCIMB 13966).